The primary structure comprises 451 residues: Bifunctional protein GlmU (451 aa).

Residues 1 to 225 (MVVVAILAAG…YQEILGINDR (225 aa)) form a pyrophosphorylase region. UDP-N-acetyl-alpha-D-glucosamine is bound by residues 7–10 (LAAG), K21, Q72, and 77–78 (GT). D102 contributes to the Mg(2+) binding site. UDP-N-acetyl-alpha-D-glucosamine is bound by residues G139, E154, N169, and N223. Residue N223 coordinates Mg(2+). The segment at 226–246 (LQLATAYEILQRRVKEQWMMA) is linker. The interval 247-451 (GVTLIDPNSI…PGWRKKSGES (205 aa)) is N-acetyltransferase. 2 residues coordinate UDP-N-acetyl-alpha-D-glucosamine: R328 and K346. The active-site Proton acceptor is H358. UDP-N-acetyl-alpha-D-glucosamine is bound by residues Y361 and N372. Acetyl-CoA contacts are provided by residues A375, 381-382 (NY), S400, A418, and R435.

In the N-terminal section; belongs to the N-acetylglucosamine-1-phosphate uridyltransferase family. It in the C-terminal section; belongs to the transferase hexapeptide repeat family. As to quaternary structure, homotrimer. Mg(2+) is required as a cofactor.

Its subcellular location is the cytoplasm. The catalysed reaction is alpha-D-glucosamine 1-phosphate + acetyl-CoA = N-acetyl-alpha-D-glucosamine 1-phosphate + CoA + H(+). It carries out the reaction N-acetyl-alpha-D-glucosamine 1-phosphate + UTP + H(+) = UDP-N-acetyl-alpha-D-glucosamine + diphosphate. Its pathway is nucleotide-sugar biosynthesis; UDP-N-acetyl-alpha-D-glucosamine biosynthesis; N-acetyl-alpha-D-glucosamine 1-phosphate from alpha-D-glucosamine 6-phosphate (route II): step 2/2. It functions in the pathway nucleotide-sugar biosynthesis; UDP-N-acetyl-alpha-D-glucosamine biosynthesis; UDP-N-acetyl-alpha-D-glucosamine from N-acetyl-alpha-D-glucosamine 1-phosphate: step 1/1. It participates in bacterial outer membrane biogenesis; LPS lipid A biosynthesis. Its function is as follows. Catalyzes the last two sequential reactions in the de novo biosynthetic pathway for UDP-N-acetylglucosamine (UDP-GlcNAc). The C-terminal domain catalyzes the transfer of acetyl group from acetyl coenzyme A to glucosamine-1-phosphate (GlcN-1-P) to produce N-acetylglucosamine-1-phosphate (GlcNAc-1-P), which is converted into UDP-GlcNAc by the transfer of uridine 5-monophosphate (from uridine 5-triphosphate), a reaction catalyzed by the N-terminal domain. This chain is Bifunctional protein GlmU, found in Trichormus variabilis (strain ATCC 29413 / PCC 7937) (Anabaena variabilis).